Here is a 542-residue protein sequence, read N- to C-terminus: Putative ankyrin repeat protein FPV115 (542 aa).

ANK repeat units lie at residues 33–62, 157–186, 218–247, 251–281, 285–314, 316–345, 347–375, and 378–407; these read FRNL…DPNS, DGLL…KTNL, NDIN…DINT, KGKT…DINV, EGLT…DVKV, TTST…EFIT, DYLS…DVNS, and CIST…NINA.

This Fowlpox virus (strain NVSL) (FPV) protein is Putative ankyrin repeat protein FPV115.